The chain runs to 620 residues: Sterile alpha motif domain-containing protein 15 (620 aa).

Residues 1–394 are disordered; that stretch reads MSEVSGDYNS…PNYPAGKDKL (394 aa). 3 stretches are compositionally biased toward basic and acidic residues: residues 62-83, 106-125, and 135-180; these read TRTR…DLQR, IDPE…KSVE, and TKSE…HFKS. A compositionally biased stretch (polar residues) spans 181 to 191; sequence TEQSGTEQPEQ. Residues 233–242 are compositionally biased toward basic residues; it reads RPLKASKKAQ. The span at 261–270 shows a compositional bias: acidic residues; the sequence is LLDDQEETQE. Basic and acidic residues-rich tracts occupy residues 271–286, 295–315, 323–337, and 347–382; these read ESIK…DRKP, KSSE…DKDP, FPKE…KTGD, and IQEK…KPES. The region spanning 480–543 is the SAM domain; the sequence is WSPERVAEWI…SYHTRVLLGI (64 aa). The span at 594-604 shows a compositional bias: basic and acidic residues; it reads EIKAEEKKEDA. Residues 594-620 form a disordered region; it reads EIKAEEKKEDALPENSLEENEELYEAT. Acidic residues predominate over residues 609–620; sequence SLEENEELYEAT.

This chain is Sterile alpha motif domain-containing protein 15 (Samd15), found in Mus musculus (Mouse).